Here is a 485-residue protein sequence, read N- to C-terminus: Sperm-associated antigen 8 (485 aa).

3 disordered regions span residues 1-42, 75-98, and 127-215; these read METN…SPRS, KTPAPCSEFMEPSSDPSLLGEPCA, and TTTD…CIPP. Low complexity predominate over residues 132–150; it reads SSNPGPVPGSSSGPVLGSS. The segment covering 151 to 191 has biased composition (gly residues); that stretch reads SGAGHGSGSGSGPGCGSVPGSGSGPGPGSGPGSGPGHGSGS. Mn stretches follow at residues 327–340 and 379–393; these read SSTTQKDSYQPPGN and ESVTHHDYRMELAQA.

Belongs to the SPAG8 family. As to quaternary structure, microtubule inner protein component of sperm flagellar doublet microtubules. Interacts with FHL5 (via second LIM domain). Interacts with RANBP9. In terms of tissue distribution, expressed in testis (germ cells), but not in liver, kidney, prostate and small intestine. Expressed in airway epithelial cells.

Its subcellular location is the cytoplasm. The protein localises to the nucleus. The protein resides in the cytoplasmic vesicle. It is found in the secretory vesicle. It localises to the acrosome. Its subcellular location is the cytoskeleton. The protein localises to the microtubule organizing center. The protein resides in the spindle. It is found in the cilium axoneme. It localises to the flagellum axoneme. Functionally, microtubule inner protein (MIP) part of the dynein-decorated doublet microtubules (DMTs) in cilia axoneme, which is required for motile cilia beating. Plays a role in spermatogenesis by enhancing the binding of CREM isoform tau to its coactivator FHL5 and increasing the FHL5-regulated transcriptional activation of CREM isoform tau. Involved in the acrosome reaction and in binding of sperm to the zona pellucida. Plays a role in regulation of the cell cycle by controlling progression through the G2/M phase, possibly by delaying the activation of CDK1 which is required for entry into mitosis. May play a role in fertility and microtubule formation through interaction with RANBP9. The protein is Sperm-associated antigen 8 of Homo sapiens (Human).